The chain runs to 1926 residues: Rho GTPase-activating protein 21-A (1926 aa).

Positions 1–41 (MATRRAIVPEQQQEPSSPASEISKNKDGQEQSEMVSPMEEE) are disordered. The span at 10 to 22 (EQQQEPSSPASEI) shows a compositional bias: polar residues. Residues 77-162 (HTSIKDEENG…TLELSVMPKD (86 aa)) form the PDZ domain. Disordered regions lie at residues 211-236 (VEVP…TTQP), 353-378 (PTAQ…QIDW), 416-487 (TDYN…RSES), 571-592 (QPTR…DRSG), 640-704 (FQRK…DSDA), and 868-905 (GKLG…DVFS). Composition is skewed to polar residues over residues 216–236 (SGTS…TTQP), 353–372 (PTAQ…SPGP), and 416–429 (TDYN…FSGQ). Over residues 441–451 (QQSVQMRQRSV) the composition is skewed to low complexity. Positions 452–466 (SQERLEDPVLMKEWP) are enriched in basic and acidic residues. Positions 468-479 (SASQDTLSSAVA) are enriched in polar residues. Positions 640–669 (FQRKTQTESASGFQLDSVKTSMSASSSPPA) are enriched in polar residues. The PH domain occupies 906–1019 (DSNKEGFLYF…WIKAIQENGN (114 aa)). Over residues 1044 to 1064 (MSSASNKSEQSPKAPRQTLSI) the composition is skewed to polar residues. The tract at residues 1044–1107 (MSSASNKSEQ…SPPKDKGSWR (64 aa)) is disordered. The segment covering 1083-1105 (PKQESERRLFSKDDISPPKDKGS) has biased composition (basic and acidic residues). The Rho-GAP domain occupies 1126-1318 (VRLDDCPPAH…TLIQKHDWFF (193 aa)). Disordered regions lie at residues 1330-1381 (VHEE…SGKD), 1396-1416 (ASRK…EDEL), 1512-1540 (QMEE…PKVV), 1573-1598 (LDPN…DERS), 1626-1658 (RQHR…TPRL), and 1827-1915 (STSE…LSGT). A compositionally biased stretch (polar residues) spans 1512 to 1534 (QMEESMSDSGTMLSNSSQASAQR). Polar residues-rich tracts occupy residues 1639 to 1653 (VQAN…TEGS) and 1866 to 1902 (TADI…NNFS).

It is found in the golgi apparatus membrane. Its subcellular location is the cell junction. The protein resides in the cytoplasmic vesicle membrane. The protein localises to the cytoplasm. It localises to the cytoskeleton. Its function is as follows. GTPase-activating protein (GAP) for rhoa and cdc42. This is Rho GTPase-activating protein 21-A (arhgap21-a) from Xenopus laevis (African clawed frog).